The sequence spans 208 residues: Pectinesterase inhibitor 6 (208 aa).

The signal sequence occupies residues 1–30 (MTSSSSSPITFTLLLLLSLLVALNPNPSLA). A disulfide bridge connects residues Cys-53 and Cys-62. 2 N-linked (GlcNAc...) asparagine glycosylation sites follow: Asn-54 and Asn-75. Cys-118 and Cys-165 are oxidised to a cystine.

This sequence belongs to the PMEI family.

The protein resides in the secreted. It localises to the extracellular space. It is found in the apoplast. Pectin methylesterase (PME) inhibitor that targets PME from seeds and modulates PME activity and pectin methylesterification during seed germination. Promotes mucilage release by limiting methylesterification of homogalacturonan in seed coat epidermal cells. The polypeptide is Pectinesterase inhibitor 6 (Arabidopsis thaliana (Mouse-ear cress)).